The primary structure comprises 224 residues: UPF0758 protein PFL_6051 (224 aa).

The MPN domain occupies 102-224 (ALENPLVVRD…PLSMAEYGWI (123 aa)). His-173, His-175, and Asp-186 together coordinate Zn(2+). The JAMM motif motif lies at 173–186 (HNHPSGICEPSPAD).

The protein belongs to the UPF0758 family.

The sequence is that of UPF0758 protein PFL_6051 from Pseudomonas fluorescens (strain ATCC BAA-477 / NRRL B-23932 / Pf-5).